A 313-amino-acid polypeptide reads, in one-letter code: Intelectin-1a (313 aa).

The N-terminal stretch at 1–18 is a signal peptide; the sequence is MTQLGFLLFIMVATRGCS. The Fibrinogen C-terminal domain occupies 32-251; sequence SFFSSLPRSC…NNERAASALC (220 aa). Cysteine 41 and cysteine 70 are oxidised to a cystine. Positions 86, 87, 89, 92, 97, 98, and 133 each coordinate Ca(2+). 3 cysteine pairs are disulfide-bonded: cysteine 94/cysteine 280, cysteine 199/cysteine 259, and cysteine 251/cysteine 265. Residues asparagine 260, glutamate 262, glutamate 274, and aspartate 282 each contribute to the Ca(2+) site. A carbohydrate-binding positions include 262-263 and glutamate 274; that span reads EH. A lipid anchor (GPI-anchor amidated serine) is attached at serine 298. Positions 299–313 are excised as a propeptide; it reads SSRKITEAAVLLFYR.

Monomer. May interact with LTF. Expressed in small intestinal Paneth cells in uninfected mice. Expression also detected in various other tissues including stomach, kidney, ovary and brain.

It is found in the cell membrane. It localises to the secreted. Functionally, lectin that specifically recognizes microbial carbohydrate chains in a calcium-dependent manner. Binds to microbial glycans that contain a terminal acyclic 1,2-diol moiety, including beta-linked D-galactofuranose (beta-Galf), D-phosphoglycerol-modified glycans, D-glycero-D-talo-oct-2-ulosonic acid (KO) and 3-deoxy-D-manno-oct-2-ulosonic acid (KDO). Binds to glycans from Gram-positive and Gram-negative bacteria, including K.pneumoniae, S.pneumoniae, Y.pestis, P.mirabilis and P.vulgaris. Does not bind mammalian glycans. Probably plays a role in the defense system against microorganisms. May function as adipokine that has no effect on basal glucose uptake but enhances insulin-stimulated glucose uptake in adipocytes. Increases AKT phosphorylation in the absence and presence of insulin. May interact with lactoferrin/LTF and increase its uptake, and may thereby play a role in iron absorption. The sequence is that of Intelectin-1a (Itln1) from Mus musculus (Mouse).